A 118-amino-acid polypeptide reads, in one-letter code: uncharacterized protein (118 aa).

The next 2 helical transmembrane spans lie at 7–27 (VIVKCEFFCIFTFIFGCFIIE) and 34–58 (VFVACCTIIKMGRCNMCIFITAIIF).

The protein localises to the membrane. This is an uncharacterized protein from Saccharomyces cerevisiae (strain ATCC 204508 / S288c) (Baker's yeast).